Reading from the N-terminus, the 142-residue chain is Midkine (142 aa).

A signal peptide spans 1–21; the sequence is MQPRGLLLLLALLLLAAAAEA. Cystine bridges form between cysteine 36–cysteine 60, cysteine 44–cysteine 69, cysteine 51–cysteine 73, cysteine 83–cysteine 115, and cysteine 93–cysteine 125.

Belongs to the pleiotrophin family.

It is found in the cell surface. The protein localises to the secreted. It localises to the extracellular space. Its subcellular location is the extracellular matrix. The protein resides in the basement membrane. Its function is as follows. Has mitogenic activity, and neurite extension activity for PC12 cells. This Gallus gallus (Chicken) protein is Midkine (RIHB).